The sequence spans 467 residues: ATP-dependent protease ATPase subunit HslU (467 aa).

ATP contacts are provided by residues V22 and 64-69 (GVGKTE). The disordered stretch occupies residues 149–192 (QTNNPLESLFGGAIPNFGQNNEDEEEPPTEEIKTKRSEIKRQLE). Positions 178 to 192 (EEIKTKRSEIKRQLE) are enriched in basic and acidic residues. ATP contacts are provided by D280, E345, and R417.

Belongs to the ClpX chaperone family. HslU subfamily. As to quaternary structure, a double ring-shaped homohexamer of HslV is capped on each side by a ring-shaped HslU homohexamer. The assembly of the HslU/HslV complex is dependent on binding of ATP.

The protein resides in the cytoplasm. Its function is as follows. ATPase subunit of a proteasome-like degradation complex; this subunit has chaperone activity. The binding of ATP and its subsequent hydrolysis by HslU are essential for unfolding of protein substrates subsequently hydrolyzed by HslV. HslU recognizes the N-terminal part of its protein substrates and unfolds these before they are guided to HslV for hydrolysis. In Staphylococcus aureus (strain MW2), this protein is ATP-dependent protease ATPase subunit HslU.